A 31-amino-acid chain; its full sequence is MWRDSLCAAAGYALGAGTRLRSVLSSRKLQP.

In terms of assembly, interacts with lactate dehydrogenases LDHA and LDHB; interaction with mitochondrial LDH leads to inhibition of lactate dehydrogenase activity, preventing conversion of lactate to pyruvate. In terms of tissue distribution, expressed in brain (at protein level). Expressed at lower levels in glioblastomas than in normal brain tissue (at protein level).

It localises to the mitochondrion. Functionally, inhibits lactate dehydrogenase (LDH)-mediated conversion of lactate to pyruvate in mitochondria by competing with mitochondrial LDH for binding to NAD(+). Also inhibits cellular lactate utilization. The polypeptide is PTEN upstream open reading frame MP31 (Homo sapiens (Human)).